We begin with the raw amino-acid sequence, 517 residues long: Probable bifunctional methylthioribulose-1-phosphate dehydratase/enolase-phosphatase E1 (517 aa).

The segment at M1–D242 is methylthioribulose-1-phosphate dehydratase. C114 serves as a coordination point for substrate. Zn(2+) contacts are provided by H132 and H134. Catalysis depends on E157, which acts as the Proton donor/acceptor; for methylthioribulose-1-phosphate dehydratase activity. Zn(2+) is bound at residue H207. An enolase-phosphatase E1 region spans residues V278–I517. Positions 281 and 283 each coordinate Mg(2+). Residues S416 to S417 and K450 contribute to the substrate site. Position 476 (D476) interacts with Mg(2+).

This sequence in the N-terminal section; belongs to the aldolase class II family. MtnB subfamily. It in the C-terminal section; belongs to the HAD-like hydrolase superfamily. MasA/MtnC family. Zn(2+) serves as cofactor. The cofactor is Mg(2+).

It catalyses the reaction 5-(methylsulfanyl)-D-ribulose 1-phosphate = 5-methylsulfanyl-2,3-dioxopentyl phosphate + H2O. The enzyme catalyses 5-methylsulfanyl-2,3-dioxopentyl phosphate + H2O = 1,2-dihydroxy-5-(methylsulfanyl)pent-1-en-3-one + phosphate. Its pathway is amino-acid biosynthesis; L-methionine biosynthesis via salvage pathway; L-methionine from S-methyl-5-thio-alpha-D-ribose 1-phosphate: step 2/6. It functions in the pathway amino-acid biosynthesis; L-methionine biosynthesis via salvage pathway; L-methionine from S-methyl-5-thio-alpha-D-ribose 1-phosphate: step 3/6. It participates in amino-acid biosynthesis; L-methionine biosynthesis via salvage pathway; L-methionine from S-methyl-5-thio-alpha-D-ribose 1-phosphate: step 4/6. The sequence is that of Probable bifunctional methylthioribulose-1-phosphate dehydratase/enolase-phosphatase E1 from Zea mays (Maize).